The chain runs to 152 residues: ESAT-6 secretion machinery protein EssA (152 aa).

Residues 1 to 114 (MLMNSVIALT…PYIQNKQEKK (114 aa)) are Cytoplasmic-facing. A helical transmembrane segment spans residues 115 to 135 (IFPYILMSVGAFLTLGFVIFS). Topologically, residues 136–152 (IHKGRRTKNESARKSNI) are extracellular.

The protein belongs to the EssA family.

The protein resides in the cell membrane. Component of the ESAT-6 secretion system (Ess). Required for the secretion of EsxA. The polypeptide is ESAT-6 secretion machinery protein EssA (Staphylococcus aureus (strain MRSA252)).